Here is a 147-residue protein sequence, read N- to C-terminus: Leghemoglobin 8 (147 aa).

Positions G2 to S147 constitute a Globin domain. Nitrated tyrosine is present on residues Y25 and Y30. S45 contributes to the heme b binding site. A Phosphoserine modification is found at S45. An O2-binding site is contributed by H62. K65, H94, and K97 together coordinate heme b. Y135 bears the Nitrated tyrosine mark.

It belongs to the plant globin family. In terms of assembly, monomer. Interacts with CAS31 in the cytoplasm; this interaction leads to its protection from denaturation under thermal and drought stresses. In terms of processing, nitrated in effective nodules and particularly in hypoxic conditions; this mechanism may play a protective role in the symbiosis by buffering toxic peroxynitrite NO(2)(-). Nitration level decrease during nodule senescence. Phosphorylation at Ser-45 disrupts the molecular environment of its porphyrin ring oxygen binding pocket, thus leading to a reduced oxygen consumption and to the delivery of oxygen O(2) to symbiosomes. As to expression, root nodules.

It localises to the cytoplasm. The protein localises to the nucleus. Its function is as follows. Leghemoglobin that reversibly binds oxygen O(2) through a pentacoordinated heme iron. In root nodules, facilitates the diffusion of oxygen to the bacteroids while preventing the bacterial nitrogenase from being inactivated by buffering dioxygen, nitric oxide and carbon monoxide, and promoting the formation of reactive oxygen species (ROS, e.g. H(2)O(2)). This role is essential for symbiotic nitrogen fixation (SNF). The protein is Leghemoglobin 8 of Medicago truncatula (Barrel medic).